The chain runs to 434 residues: Tol-Pal system protein TolB (434 aa).

Positions methionine 1–alanine 21 are cleaved as a signal peptide. The disordered stretch occupies residues glycine 411–proline 434.

The protein belongs to the TolB family. In terms of assembly, the Tol-Pal system is composed of five core proteins: the inner membrane proteins TolA, TolQ and TolR, the periplasmic protein TolB and the outer membrane protein Pal. They form a network linking the inner and outer membranes and the peptidoglycan layer.

It is found in the periplasm. Functionally, part of the Tol-Pal system, which plays a role in outer membrane invagination during cell division and is important for maintaining outer membrane integrity. This Anaeromyxobacter dehalogenans (strain 2CP-1 / ATCC BAA-258) protein is Tol-Pal system protein TolB.